The primary structure comprises 152 residues: CASP-like protein 5B1 (152 aa).

Over 1 to 11 (MKKMIGSPGTM) the chain is Cytoplasmic. The helical transmembrane segment at 12 to 32 (SGLILRLGQCATAAASIGVMV) threads the bilayer. Residues 33–42 (SSYDFSNYTA) lie on the Extracellular side of the membrane. Asn39 is a glycosylation site (N-linked (GlcNAc...) asparagine). Residues 43–63 (FCFLVASMGLQLIWSFGLACL) form a helical membrane-spanning segment. Residues 64–77 (DVYAIRRKSDLRSP) lie on the Cytoplasmic side of the membrane. Residues 78-98 (ILLSLFTVGDWVTALLALAAA) form a helical membrane-spanning segment. Topologically, residues 99–131 (CSSAGVTVLFTKDTEFCRQQPALSCDRFQISVG) are extracellular. A helical membrane pass occupies residues 132–152 (LSFFNWFLAAISSHTMFWILI).

It belongs to the Casparian strip membrane proteins (CASP) family. In terms of assembly, homodimer and heterodimers. In terms of tissue distribution, expressed in leaves, exclusively in hair cells (e.g. differentiated trichomes and immature cells).

Its subcellular location is the cell membrane. The protein is CASP-like protein 5B1 of Arabidopsis thaliana (Mouse-ear cress).